Here is a 293-residue protein sequence, read N- to C-terminus: Homoserine O-acetyltransferase (293 aa).

Residue Cys141 is the Acyl-thioester intermediate of the active site. 2 residues coordinate substrate: Lys162 and Ser190. His234 serves as the catalytic Proton acceptor. Glu236 is a catalytic residue. Arg248 lines the substrate pocket.

The protein belongs to the MetA family.

It is found in the cytoplasm. It carries out the reaction L-homoserine + acetyl-CoA = O-acetyl-L-homoserine + CoA. It functions in the pathway amino-acid biosynthesis; L-methionine biosynthesis via de novo pathway; O-acetyl-L-homoserine from L-homoserine: step 1/1. Its function is as follows. Transfers an acetyl group from acetyl-CoA to L-homoserine, forming acetyl-L-homoserine. This chain is Homoserine O-acetyltransferase, found in Campylobacter jejuni subsp. jejuni serotype O:2 (strain ATCC 700819 / NCTC 11168).